The sequence spans 600 residues: Transcription factor efl-3 (600 aa).

Residues 35–65 (LPEPRVNRTTDPDHENLLPSPVPRPSPAMSQ) form a disordered region. The span at 39-50 (RVNRTTDPDHEN) shows a compositional bias: basic and acidic residues. DNA-binding regions lie at residues 95 to 164 (RKEK…QWQG) and 253 to 343 (RDRQ…VYCG).

This sequence belongs to the E2F/DP family.

The protein localises to the nucleus. Its function is as follows. Probable transcription factor which represses gene expression in a subset of ventral nerve cord neurons. Involved in regulating programmed cell death and determining cell fate during development, acting in a partially redundant manner with lin-39 to repress the BH3 domain-encoding gene egl-1 in the VA and VB motor neurons. This chain is Transcription factor efl-3, found in Caenorhabditis elegans.